The sequence spans 380 residues: Cytochrome b (380 aa).

Transmembrane regions (helical) follow at residues 34 to 54 (FGSL…LLAT), 78 to 99 (WLIR…YLHI), 114 to 134 (WNTG…GYVL), and 179 to 199 (FFAL…IHLT). Residues His-84 and His-98 each contribute to the heme b site. Residues His-183 and His-197 each contribute to the heme b site. Residue His-202 participates in a ubiquinone binding. Helical transmembrane passes span 227–247 (LKDI…ALFS), 289–309 (LGGV…PLLH), 321–341 (LSQL…WVGS), and 348–368 (FIII…LLFP).

Belongs to the cytochrome b family. As to quaternary structure, the cytochrome bc1 complex contains 11 subunits: 3 respiratory subunits (MT-CYB, CYC1 and UQCRFS1), 2 core proteins (UQCRC1 and UQCRC2) and 6 low-molecular weight proteins (UQCRH/QCR6, UQCRB/QCR7, UQCRQ/QCR8, UQCR10/QCR9, UQCR11/QCR10 and a cleavage product of UQCRFS1). This cytochrome bc1 complex then forms a dimer. The cofactor is heme b.

The protein localises to the mitochondrion inner membrane. Its function is as follows. Component of the ubiquinol-cytochrome c reductase complex (complex III or cytochrome b-c1 complex) that is part of the mitochondrial respiratory chain. The b-c1 complex mediates electron transfer from ubiquinol to cytochrome c. Contributes to the generation of a proton gradient across the mitochondrial membrane that is then used for ATP synthesis. The sequence is that of Cytochrome b (MT-CYB) from Uria aalge (Common mure).